Here is a 260-residue protein sequence, read N- to C-terminus: Glutathione S-transferase domain-containing protein DDB_G0274223 (260 aa).

Positions 7-96 constitute a GST N-terminal domain; that stretch reads KVDYIFYTNN…YLAQKYNTFL (90 aa). One can recognise a GST C-terminal domain in the interval 102–233; it reads NPHENSDVIT…GFKTFNPSAL (132 aa).

This sequence belongs to the GST superfamily.

This is Glutathione S-transferase domain-containing protein DDB_G0274223 from Dictyostelium discoideum (Social amoeba).